The primary structure comprises 166 residues: Crossover junction endodeoxyribonuclease RuvC (166 aa).

Catalysis depends on residues D7, E68, and D141. Residues D7, E68, and D141 each contribute to the Mg(2+) site.

The protein belongs to the RuvC family. In terms of assembly, homodimer which binds Holliday junction (HJ) DNA. The HJ becomes 2-fold symmetrical on binding to RuvC with unstacked arms; it has a different conformation from HJ DNA in complex with RuvA. In the full resolvosome a probable DNA-RuvA(4)-RuvB(12)-RuvC(2) complex forms which resolves the HJ. Mg(2+) is required as a cofactor.

The protein resides in the cytoplasm. The enzyme catalyses Endonucleolytic cleavage at a junction such as a reciprocal single-stranded crossover between two homologous DNA duplexes (Holliday junction).. In terms of biological role, the RuvA-RuvB-RuvC complex processes Holliday junction (HJ) DNA during genetic recombination and DNA repair. Endonuclease that resolves HJ intermediates. Cleaves cruciform DNA by making single-stranded nicks across the HJ at symmetrical positions within the homologous arms, yielding a 5'-phosphate and a 3'-hydroxyl group; requires a central core of homology in the junction. The consensus cleavage sequence is 5'-(A/T)TT(C/G)-3'. Cleavage occurs on the 3'-side of the TT dinucleotide at the point of strand exchange. HJ branch migration catalyzed by RuvA-RuvB allows RuvC to scan DNA until it finds its consensus sequence, where it cleaves and resolves the cruciform DNA. The polypeptide is Crossover junction endodeoxyribonuclease RuvC (Caldicellulosiruptor saccharolyticus (strain ATCC 43494 / DSM 8903 / Tp8T 6331)).